A 375-amino-acid chain; its full sequence is Queuine tRNA-ribosyltransferase (375 aa).

Asp89 (proton acceptor) is an active-site residue. Substrate contacts are provided by residues 89–93, Asp143, Gln187, and Gly214; that span reads DSGGF. Residues 245 to 251 are RNA binding; sequence GVGKPED. Asp264 serves as the catalytic Nucleophile. Positions 269 to 273 are RNA binding; important for wobble base 34 recognition; the sequence is TRNAR. Zn(2+) is bound by residues Cys302, Cys304, Cys307, and His333.

This sequence belongs to the queuine tRNA-ribosyltransferase family. As to quaternary structure, homodimer. Within each dimer, one monomer is responsible for RNA recognition and catalysis, while the other monomer binds to the replacement base PreQ1. Zn(2+) serves as cofactor.

It catalyses the reaction 7-aminomethyl-7-carbaguanine + guanosine(34) in tRNA = 7-aminomethyl-7-carbaguanosine(34) in tRNA + guanine. It participates in tRNA modification; tRNA-queuosine biosynthesis. Catalyzes the base-exchange of a guanine (G) residue with the queuine precursor 7-aminomethyl-7-deazaguanine (PreQ1) at position 34 (anticodon wobble position) in tRNAs with GU(N) anticodons (tRNA-Asp, -Asn, -His and -Tyr). Catalysis occurs through a double-displacement mechanism. The nucleophile active site attacks the C1' of nucleotide 34 to detach the guanine base from the RNA, forming a covalent enzyme-RNA intermediate. The proton acceptor active site deprotonates the incoming PreQ1, allowing a nucleophilic attack on the C1' of the ribose to form the product. After dissociation, two additional enzymatic reactions on the tRNA convert PreQ1 to queuine (Q), resulting in the hypermodified nucleoside queuosine (7-(((4,5-cis-dihydroxy-2-cyclopenten-1-yl)amino)methyl)-7-deazaguanosine). The polypeptide is Queuine tRNA-ribosyltransferase (Shigella flexneri serotype 5b (strain 8401)).